We begin with the raw amino-acid sequence, 181 residues long: Large ribosomal subunit protein uL5 (181 aa).

The protein belongs to the universal ribosomal protein uL5 family. Part of the 50S ribosomal subunit; part of the 5S rRNA/L5/L18/L25 subcomplex. Contacts the 5S rRNA and the P site tRNA. Forms a bridge to the 30S subunit in the 70S ribosome.

In terms of biological role, this is one of the proteins that bind and probably mediate the attachment of the 5S RNA into the large ribosomal subunit, where it forms part of the central protuberance. In the 70S ribosome it contacts protein S13 of the 30S subunit (bridge B1b), connecting the 2 subunits; this bridge is implicated in subunit movement. Contacts the P site tRNA; the 5S rRNA and some of its associated proteins might help stabilize positioning of ribosome-bound tRNAs. The chain is Large ribosomal subunit protein uL5 from Nitrosococcus oceani (strain ATCC 19707 / BCRC 17464 / JCM 30415 / NCIMB 11848 / C-107).